A 218-amino-acid polypeptide reads, in one-letter code: Pyridoxine/pyridoxamine 5'-phosphate oxidase (218 aa).

Substrate contacts are provided by residues 14–17 (RREY) and Lys-72. FMN is bound by residues 67–72 (RIVLLK), 82–83 (YT), Arg-88, Lys-89, and Gln-111. Substrate-binding residues include Tyr-129, Arg-133, and Ser-137. Residues 146–147 (QS) and Trp-191 contribute to the FMN site. 197 to 199 (RLH) is a binding site for substrate. Arg-201 serves as a coordination point for FMN.

This sequence belongs to the pyridoxamine 5'-phosphate oxidase family. Homodimer. It depends on FMN as a cofactor.

The catalysed reaction is pyridoxamine 5'-phosphate + O2 + H2O = pyridoxal 5'-phosphate + H2O2 + NH4(+). It catalyses the reaction pyridoxine 5'-phosphate + O2 = pyridoxal 5'-phosphate + H2O2. Its pathway is cofactor metabolism; pyridoxal 5'-phosphate salvage; pyridoxal 5'-phosphate from pyridoxamine 5'-phosphate: step 1/1. The protein operates within cofactor metabolism; pyridoxal 5'-phosphate salvage; pyridoxal 5'-phosphate from pyridoxine 5'-phosphate: step 1/1. Catalyzes the oxidation of either pyridoxine 5'-phosphate (PNP) or pyridoxamine 5'-phosphate (PMP) into pyridoxal 5'-phosphate (PLP). The polypeptide is Pyridoxine/pyridoxamine 5'-phosphate oxidase (Klebsiella pneumoniae subsp. pneumoniae (strain ATCC 700721 / MGH 78578)).